The chain runs to 505 residues: Deoxyguanosinetriphosphate triphosphohydrolase (505 aa).

An HD domain is found at 66 to 273; the sequence is RLTHSLEVQQ…MEAADDISYC (208 aa).

This sequence belongs to the dGTPase family. Type 1 subfamily. In terms of assembly, homotetramer. It depends on Mg(2+) as a cofactor.

The enzyme catalyses dGTP + H2O = 2'-deoxyguanosine + triphosphate + H(+). DGTPase preferentially hydrolyzes dGTP over the other canonical NTPs. The protein is Deoxyguanosinetriphosphate triphosphohydrolase of Escherichia fergusonii (strain ATCC 35469 / DSM 13698 / CCUG 18766 / IAM 14443 / JCM 21226 / LMG 7866 / NBRC 102419 / NCTC 12128 / CDC 0568-73).